Reading from the N-terminus, the 187-residue chain is Potassium-transporting ATPase KdpC subunit (187 aa).

A helical membrane pass occupies residues 10-30 (LVAATMLICVAGYSAAVWAVG).

The protein belongs to the KdpC family. As to quaternary structure, the system is composed of three essential subunits: KdpA, KdpB and KdpC.

It localises to the cell inner membrane. Functionally, part of the high-affinity ATP-driven potassium transport (or Kdp) system, which catalyzes the hydrolysis of ATP coupled with the electrogenic transport of potassium into the cytoplasm. This subunit acts as a catalytic chaperone that increases the ATP-binding affinity of the ATP-hydrolyzing subunit KdpB by the formation of a transient KdpB/KdpC/ATP ternary complex. The sequence is that of Potassium-transporting ATPase KdpC subunit from Parvibaculum lavamentivorans (strain DS-1 / DSM 13023 / NCIMB 13966).